Consider the following 116-residue polypeptide: uncharacterized protein (116 aa).

3 helical membrane-spanning segments follow: residues 8 to 28, 39 to 59, and 75 to 95; these read FMIY…VSFA, GLLL…NPPF, and FLLI…YLMV.

It to M.jannaschii MJ1580.

Its subcellular location is the cell membrane. This is an uncharacterized protein from Methanothermobacter thermautotrophicus (strain ATCC 29096 / DSM 1053 / JCM 10044 / NBRC 100330 / Delta H) (Methanobacterium thermoautotrophicum).